The chain runs to 95 residues: Small ribosomal subunit protein bS20 (95 aa).

Belongs to the bacterial ribosomal protein bS20 family.

Functionally, binds directly to 16S ribosomal RNA. The chain is Small ribosomal subunit protein bS20 from Ehrlichia chaffeensis (strain ATCC CRL-10679 / Arkansas).